The following is a 427-amino-acid chain: Galactose-3-O-sulfotransferase 3 (427 aa).

Over 1–19 (MPPIFQRLQQATKMSRRKI) the chain is Cytoplasmic. A helical; Signal-anchor for type II membrane protein membrane pass occupies residues 20–40 (LLLVLGCSTLSLLIHQGAQLS). At 41-427 (WYPKLFPLSC…RPIRALRPGH (387 aa)) the chain is on the lumenal side. N-linked (GlcNAc...) asparagine glycosylation is found at asparagine 90, asparagine 109, asparagine 176, and asparagine 301. A disordered region spans residues 404-427 (MRLRPEPVLDNPPPRPIRALRPGH).

Belongs to the galactose-3-O-sulfotransferase family. The cofactor is Mg(2+).

It localises to the golgi apparatus. The protein resides in the golgi stack membrane. It participates in protein modification; carbohydrate sulfation. Transfers a sulfate to position 3 of non-reducing beta-galactosyl residues in N-glycans and core2-branched O-glycans. Has high activity towards Gal-beta-1,4-GlcNAc, Gal-beta-1,4(Fuc-alpha-1,3)GlcNAc and lower activity towards Gal-beta-1,3(Fuc-alpha-1,4)GlcNAc. This Bos taurus (Bovine) protein is Galactose-3-O-sulfotransferase 3 (GAL3ST3).